We begin with the raw amino-acid sequence, 715 residues long: Eosinophil peroxidase (715 aa).

Residues 1-17 (MHLLPALAGVLATLVLA) form the signal peptide. Residues 18-139 (QPCEGTDPAS…SGCALRDQAE (122 aa)) constitute a propeptide that is removed on maturation. N-linked (GlcNAc...) asparagine glycosylation is found at asparagine 52 and asparagine 113. Cysteine 141 and cysteine 152 are joined by a disulfide. Aspartate 232 serves as a coordination point for heme b. Residue histidine 233 is the Proton acceptor of the active site. Aspartate 234 serves as a coordination point for Ca(2+). 2 disulfide bridges follow: cysteine 253-cysteine 263 and cysteine 257-cysteine 281. Ca(2+)-binding residues include threonine 306, phenylalanine 308, aspartate 310, and serine 312. N-linked (GlcNAc...) asparagine glycans are attached at residues asparagine 327 and asparagine 363. A disulfide bridge links cysteine 359 with cysteine 370. Heme b-binding residues include glutamate 380 and histidine 474. 3'-nitrotyrosine is present on tyrosine 488. Cystine bridges form between cysteine 578-cysteine 635 and cysteine 676-cysteine 701. Asparagine 700 and asparagine 708 each carry an N-linked (GlcNAc...) asparagine glycan.

It belongs to the peroxidase family. XPO subfamily. As to quaternary structure, tetramer of two light chains and two heavy chains. Ca(2+) serves as cofactor. It depends on heme b as a cofactor.

It is found in the cytoplasmic granule. It carries out the reaction 2 a phenolic donor + H2O2 = 2 a phenolic radical donor + 2 H2O. Mediates tyrosine nitration of secondary granule proteins in mature resting eosinophils. Shows significant inhibitory activity towards Mycobacterium tuberculosis H37Rv by inducing bacterial fragmentation and lysis. The chain is Eosinophil peroxidase (EPX) from Homo sapiens (Human).